Consider the following 77-residue polypeptide: Acyl carrier protein (77 aa).

The Carrier domain maps to 1–76; it reads MATFDDVKAV…DVVNYIDNLK (76 aa). Residue Ser-36 is modified to O-(pantetheine 4'-phosphoryl)serine.

Belongs to the acyl carrier protein (ACP) family. Post-translationally, 4'-phosphopantetheine is transferred from CoA to a specific serine of apo-ACP by AcpS. This modification is essential for activity because fatty acids are bound in thioester linkage to the sulfhydryl of the prosthetic group.

The protein localises to the cytoplasm. Its pathway is lipid metabolism; fatty acid biosynthesis. Carrier of the growing fatty acid chain in fatty acid biosynthesis. The chain is Acyl carrier protein from Campylobacter jejuni (strain RM1221).